Reading from the N-terminus, the 217-residue chain is Choline transport system permease protein OpuBB (217 aa).

In terms of domain architecture, ABC transmembrane type-1 spans 19 to 198 (TYEHITISLI…ILAIVIDYVL (180 aa)). A run of 6 helical transmembrane segments spans residues 23 to 43 (ITISLIAVILGVLVAVPLGVV), 52 to 74 (GTIIGIVNIIQTLPSLAILAFFI), 84 to 101 (AIVALFFYSVLPILRNTY), 128 to 148 (LVELPLAAPVIMAGIRTSTIY), 150 to 170 (IGWATLASFIGGGGLGDYIFI), and 180 to 200 (IIGGAVPVTILAIVIDYVLAV).

The protein belongs to the binding-protein-dependent transport system permease family. CysTW subfamily.

It localises to the cell membrane. Functionally, involved in a high affinity multicomponent binding-protein-dependent transport system for choline; probably responsible for the translocation of the substrate across the membrane. The sequence is that of Choline transport system permease protein OpuBB (opuBB) from Bacillus subtilis (strain 168).